The sequence spans 422 residues: Inhibitory synaptic factor 2A (422 aa).

Residues 143 to 163 (FLADSKEKSEAGPMEEPRPCS) are disordered. The segment covering 146–160 (DSKEKSEAGPMEEPR) has biased composition (basic and acidic residues). Serine 177 carries the post-translational modification Phosphoserine. A coiled-coil region spans residues 344–370 (TEVVDLKAQLQVMENLISSSQETIKVL).

This sequence belongs to the INSYN2 family. In terms of assembly, interacts with GPHN.

It localises to the postsynaptic density. Component of the protein machinery at the inhibitory synapses, probably acting as a scaffold. Inhibitory synapses dampen neuronal activity through postsynaptic hyperpolarization. This synaptic inhibition is fundamental for the functioning of the central nervous system, shaping and orchestrating the flow of information through neuronal networks to generate a precise neural code. This is Inhibitory synaptic factor 2A from Mus musculus (Mouse).